We begin with the raw amino-acid sequence, 469 residues long: Ribulose bisphosphate carboxylase large chain (469 aa).

The residue at position 5 (Lys-5) is an N6,N6,N6-trimethyllysine. Substrate-binding residues include Asn-114 and Thr-164. Lys-166 (proton acceptor) is an active-site residue. Lys-168 is a substrate binding site. Positions 192, 194, and 195 each coordinate Mg(2+). N6-carboxylysine is present on Lys-192. His-285 serves as the catalytic Proton acceptor. The substrate site is built by Arg-286, His-318, and Ser-370.

This sequence belongs to the RuBisCO large chain family. Type I subfamily. Heterohexadecamer of 8 large chains and 8 small chains; disulfide-linked. The disulfide link is formed within the large subunit homodimers. The cofactor is Mg(2+). In terms of processing, the disulfide bond which can form in the large chain dimeric partners within the hexadecamer appears to be associated with oxidative stress and protein turnover.

It localises to the plastid. The protein localises to the chloroplast. The enzyme catalyses 2 (2R)-3-phosphoglycerate + 2 H(+) = D-ribulose 1,5-bisphosphate + CO2 + H2O. It carries out the reaction D-ribulose 1,5-bisphosphate + O2 = 2-phosphoglycolate + (2R)-3-phosphoglycerate + 2 H(+). Functionally, ruBisCO catalyzes two reactions: the carboxylation of D-ribulose 1,5-bisphosphate, the primary event in carbon dioxide fixation, as well as the oxidative fragmentation of the pentose substrate in the photorespiration process. Both reactions occur simultaneously and in competition at the same active site. This chain is Ribulose bisphosphate carboxylase large chain, found in Antirhea lucida (Palo iloron).